A 135-amino-acid chain; its full sequence is Immunity protein RhsIA (135 aa).

Residues 58 to 77 (RKQGRQISLSCGEPPEYSPD) are disordered.

Functionally, immunity component of a toxin-immunity protein module, which functions as a cellular contact-dependent growth inhibition (CDI) system. Specifically inhibits its cognate toxin RhsA. Cell contact is necessary for growth inhibition. This Dickeya dadantii (strain 3937) (Erwinia chrysanthemi (strain 3937)) protein is Immunity protein RhsIA (rhsIA).